Consider the following 430-residue polypeptide: 3-phosphoshikimate 1-carboxyvinyltransferase (430 aa).

The 3-phosphoshikimate site is built by lysine 23, serine 24, and arginine 28. Residue lysine 23 coordinates phosphoenolpyruvate. Phosphoenolpyruvate-binding residues include glycine 93 and arginine 121. Serine 166, glutamine 168, aspartate 313, and lysine 340 together coordinate 3-phosphoshikimate. Glutamine 168 lines the phosphoenolpyruvate pocket. The Proton acceptor role is filled by aspartate 313. Phosphoenolpyruvate-binding residues include arginine 344 and arginine 386.

This sequence belongs to the EPSP synthase family. In terms of assembly, monomer.

The protein resides in the cytoplasm. It catalyses the reaction 3-phosphoshikimate + phosphoenolpyruvate = 5-O-(1-carboxyvinyl)-3-phosphoshikimate + phosphate. Its pathway is metabolic intermediate biosynthesis; chorismate biosynthesis; chorismate from D-erythrose 4-phosphate and phosphoenolpyruvate: step 6/7. In terms of biological role, catalyzes the transfer of the enolpyruvyl moiety of phosphoenolpyruvate (PEP) to the 5-hydroxyl of shikimate-3-phosphate (S3P) to produce enolpyruvyl shikimate-3-phosphate and inorganic phosphate. The polypeptide is 3-phosphoshikimate 1-carboxyvinyltransferase (Anaeromyxobacter sp. (strain Fw109-5)).